The primary structure comprises 331 residues: Adenosine deaminase (331 aa).

Zn(2+) contacts are provided by H12 and H14. Residues H14, D16, and G170 each contribute to the substrate site. H197 lines the Zn(2+) pocket. Residue E200 is the Proton donor of the active site. D278 lines the Zn(2+) pocket.

The protein belongs to the metallo-dependent hydrolases superfamily. Adenosine and AMP deaminases family. Adenosine deaminase subfamily. Requires Zn(2+) as cofactor.

It carries out the reaction adenosine + H2O + H(+) = inosine + NH4(+). The catalysed reaction is 2'-deoxyadenosine + H2O + H(+) = 2'-deoxyinosine + NH4(+). In terms of biological role, catalyzes the hydrolytic deamination of adenosine and 2-deoxyadenosine. This Clostridium botulinum (strain 657 / Type Ba4) protein is Adenosine deaminase.